The sequence spans 146 residues: MPKILVDADACPVKAEIKQVAEQFQLDVIFVASFNHYSVNTNGENWIFVDTGKESADMRMMNLANKGDIIVTQDIGLASILLAKGTYVFSNRGELYREEEMSLMLDIRYRHAKERQQGKYSKGPKAMSDQDRVLFKDRMTTFFKNK.

Belongs to the UPF0178 family.

The chain is UPF0178 protein Lin1493 from Listeria innocua serovar 6a (strain ATCC BAA-680 / CLIP 11262).